The sequence spans 99 residues: Large ribosomal subunit protein bL21 (99 aa).

It belongs to the bacterial ribosomal protein bL21 family. As to quaternary structure, part of the 50S ribosomal subunit. Contacts protein L20.

In terms of biological role, this protein binds to 23S rRNA in the presence of protein L20. This is Large ribosomal subunit protein bL21 from Neorickettsia sennetsu (strain ATCC VR-367 / Miyayama) (Ehrlichia sennetsu).